The sequence spans 742 residues: Pyriculol/pyriculariol biosynthesis cluster transcription factor 1 (742 aa).

Residues 23–49 (CVLCQHRKIKCDRSFPCANCQRANVQC) constitute a DNA-binding region (zn(2)-C6 fungal-type). The disordered stretch occupies residues 85-116 (GKPDIARLTTKRSSLSQSPPKGEEPLPEWNRH). Over residues 105–116 (KGEEPLPEWNRH) the composition is skewed to basic and acidic residues.

It localises to the nucleus. In terms of biological role, transcriptional regulator; part of the gene cluster that mediates the biosynthesis of pyriculol and pyriculariol, two heptaketides that induce lesion formation upon application on rice leaves but are dispensable for pathogenicity. With TRF2, negatively regulates the expression of the gene cluster and the subsequent pyriculol and pyriculariol production. The sequence is that of Pyriculol/pyriculariol biosynthesis cluster transcription factor 1 from Pyricularia oryzae (strain 70-15 / ATCC MYA-4617 / FGSC 8958) (Rice blast fungus).